A 289-amino-acid chain; its full sequence is Cbb3-type cytochrome c oxidase subunit FixP (289 aa).

Residues methionine 1 to arginine 33 lie on the Cytoplasmic side of the membrane. The chain crosses the membrane as a helical span at residues tryptophan 34–tryptophan 56. The Periplasmic portion of the chain corresponds to proline 57–glutamate 289. 2 consecutive Cytochrome c domains span residues phenylalanine 110 to threonine 198 and histidine 205 to glycine 286. Residues cysteine 123, cysteine 126, histidine 127, methionine 175, cysteine 218, cysteine 221, histidine 222, and methionine 263 each coordinate heme c.

The protein belongs to the CcoP / FixP family. As to quaternary structure, component of the cbb3-type cytochrome c oxidase at least composed of FixN, FixO, FixQ and FixP. Heme c is required as a cofactor.

It is found in the cell inner membrane. It functions in the pathway energy metabolism; oxidative phosphorylation. Its function is as follows. C-type cytochrome. Part of the cbb3-type cytochrome c oxidase complex. FixP subunit is required for transferring electrons from donor cytochrome c via its heme groups to FixO subunit. From there, electrons are shuttled to the catalytic binuclear center of FixN subunit where oxygen reduction takes place. The complex also functions as a proton pump. In Sinorhizobium medicae (strain WSM419) (Ensifer medicae), this protein is Cbb3-type cytochrome c oxidase subunit FixP.